The sequence spans 509 residues: ATP synthase subunit alpha (509 aa).

An ATP-binding site is contributed by 169-176 (GDRQTGKT).

This sequence belongs to the ATPase alpha/beta chains family. In terms of assembly, F-type ATPases have 2 components, CF(1) - the catalytic core - and CF(0) - the membrane proton channel. CF(1) has five subunits: alpha(3), beta(3), gamma(1), delta(1), epsilon(1). CF(0) has three main subunits: a(1), b(2) and c(9-12). The alpha and beta chains form an alternating ring which encloses part of the gamma chain. CF(1) is attached to CF(0) by a central stalk formed by the gamma and epsilon chains, while a peripheral stalk is formed by the delta and b chains.

It localises to the cell inner membrane. It catalyses the reaction ATP + H2O + 4 H(+)(in) = ADP + phosphate + 5 H(+)(out). In terms of biological role, produces ATP from ADP in the presence of a proton gradient across the membrane. The alpha chain is a regulatory subunit. The polypeptide is ATP synthase subunit alpha (Brucella abortus (strain S19)).